The following is an 83-amino-acid chain: ATP synthase subunit c (83 aa).

2 consecutive transmembrane segments (helical) span residues 9–29 (LICV…GIGI) and 51–71 (MVFM…GLVI).

This sequence belongs to the ATPase C chain family. As to quaternary structure, F-type ATPases have 2 components, F(1) - the catalytic core - and F(0) - the membrane proton channel. F(1) has five subunits: alpha(3), beta(3), gamma(1), delta(1), epsilon(1). F(0) has three main subunits: a(1), b(2) and c(10-14). The alpha and beta chains form an alternating ring which encloses part of the gamma chain. F(1) is attached to F(0) by a central stalk formed by the gamma and epsilon chains, while a peripheral stalk is formed by the delta and b chains.

Its subcellular location is the cell inner membrane. F(1)F(0) ATP synthase produces ATP from ADP in the presence of a proton or sodium gradient. F-type ATPases consist of two structural domains, F(1) containing the extramembraneous catalytic core and F(0) containing the membrane proton channel, linked together by a central stalk and a peripheral stalk. During catalysis, ATP synthesis in the catalytic domain of F(1) is coupled via a rotary mechanism of the central stalk subunits to proton translocation. In terms of biological role, key component of the F(0) channel; it plays a direct role in translocation across the membrane. A homomeric c-ring of between 10-14 subunits forms the central stalk rotor element with the F(1) delta and epsilon subunits. The polypeptide is ATP synthase subunit c (Desulfotalea psychrophila (strain LSv54 / DSM 12343)).